A 291-amino-acid chain; its full sequence is Pantothenate synthetase (291 aa).

30-37 is a binding site for ATP; that stretch reads MGYLHVGH. Catalysis depends on His37, which acts as the Proton donor. Gln61 is a (R)-pantoate binding site. Gln61 is a beta-alanine binding site. 147-150 contacts ATP; the sequence is GEKD. Gln153 serves as a coordination point for (R)-pantoate. Residues Val176 and 184 to 187 contribute to the ATP site; that span reads CSSR.

The protein belongs to the pantothenate synthetase family. In terms of assembly, homodimer.

Its subcellular location is the cytoplasm. It carries out the reaction (R)-pantoate + beta-alanine + ATP = (R)-pantothenate + AMP + diphosphate + H(+). It participates in cofactor biosynthesis; (R)-pantothenate biosynthesis; (R)-pantothenate from (R)-pantoate and beta-alanine: step 1/1. Catalyzes the condensation of pantoate with beta-alanine in an ATP-dependent reaction via a pantoyl-adenylate intermediate. The protein is Pantothenate synthetase of Rhizobium meliloti (strain 1021) (Ensifer meliloti).